We begin with the raw amino-acid sequence, 377 residues long: Uroporphyrinogen decarboxylase (377 aa).

Substrate contacts are provided by residues R40–R44, D89, Y169, S224, and H354.

The protein belongs to the uroporphyrinogen decarboxylase family. In terms of assembly, homodimer.

It is found in the cytoplasm. The catalysed reaction is uroporphyrinogen III + 4 H(+) = coproporphyrinogen III + 4 CO2. It functions in the pathway porphyrin-containing compound metabolism; protoporphyrin-IX biosynthesis; coproporphyrinogen-III from 5-aminolevulinate: step 4/4. Catalyzes the decarboxylation of four acetate groups of uroporphyrinogen-III to yield coproporphyrinogen-III. This is Uroporphyrinogen decarboxylase from Leifsonia xyli subsp. xyli (strain CTCB07).